The primary structure comprises 248 residues: Ankyrin repeat domain-containing protein 45 (248 aa).

2 stretches are compositionally biased toward acidic residues: residues 1–10 (MEPEETLESE) and 22–33 (EYEESQEAEETG). Residues 1–42 (MEPEETLESESSEKSLFSSQQEYEESQEAEETGAENPLLQPT) are disordered. ANK repeat units follow at residues 75-104 (VGRN…NLNE) and 108-137 (RGYT…DIEA).

The protein resides in the cytoplasm. The protein localises to the midbody. It is found in the midbody ring. It localises to the cleavage furrow. May play a role during cell division. In Mus musculus (Mouse), this protein is Ankyrin repeat domain-containing protein 45 (Ankrd45).